Here is a 358-residue protein sequence, read N- to C-terminus: GMP reductase (358 aa).

NADP(+) contacts are provided by residues 26–27 (SR), K78, 130–132 (DVA), and 181–182 (IG). K(+) contacts are provided by G182, G184, and C187. C187 acts as the Thioimidate intermediate in catalysis. The active-site Proton donor/acceptor is the T189. Residue R190 participates in K(+) binding. GMP contacts are provided by residues 220–222 (DGG), 243–244 (GG), 269–271 (GMS), and 287–291 (RASEG). NADP(+) contacts are provided by residues M270, 286–287 (YR), and 315–318 (SACT).

The protein belongs to the IMPDH/GMPR family. GuaC type 1 subfamily. In terms of assembly, homotetramer.

It catalyses the reaction IMP + NH4(+) + NADP(+) = GMP + NADPH + 2 H(+). Functionally, catalyzes the irreversible NADPH-dependent deamination of GMP to IMP. It functions in the conversion of nucleobase, nucleoside and nucleotide derivatives of G to A nucleotides, and in maintaining the intracellular balance of A and G nucleotides. This is GMP reductase from Caenorhabditis elegans.